Reading from the N-terminus, the 387-residue chain is Eukaryotic translation initiation factor 3 subunit M (387 aa).

Residues 181 to 340 (LSSKVMIELL…RKVHISSTMH (160 aa)) enclose the PCI domain.

This sequence belongs to the eIF-3 subunit M family. As to quaternary structure, component of the eukaryotic translation initiation factor 3 (eIF-3) complex. The eIF-3 complex interacts with pix.

The protein resides in the cytoplasm. It is found in the golgi apparatus. Component of the eukaryotic translation initiation factor 3 (eIF-3) complex, which is involved in protein synthesis of a specialized repertoire of mRNAs and, together with other initiation factors, stimulates binding of mRNA and methionyl-tRNAi to the 40S ribosome. The eIF-3 complex specifically targets and initiates translation of a subset of mRNAs involved in cell proliferation. In Drosophila mojavensis (Fruit fly), this protein is Eukaryotic translation initiation factor 3 subunit M.